A 685-amino-acid chain; its full sequence is Serotransferrin (685 aa).

The first 16 residues, 1 to 16 (MKPLLLLPLLGCLATI), serve as a signal peptide directing secretion. Transferrin-like domains lie at 23–329 (VKWC…ALKI) and 340–666 (MKWC…SLRT). A disulfide bridge links cysteine 26 with cysteine 48. Aspartate 72 and tyrosine 102 together coordinate Fe(3+). 3 cysteine pairs are disulfide-bonded: cysteine 125–cysteine 206, cysteine 170–cysteine 184, and cysteine 234–cysteine 248. Hydrogencarbonate is bound by residues threonine 127, lysine 131, alanine 133, and glycine 134. Tyrosine 200 contributes to the Fe(3+) binding site. Histidine 256 serves as a coordination point for Fe(3+). 2 disulfides stabilise this stretch: cysteine 343–cysteine 379 and cysteine 353–cysteine 370. 2 residues coordinate Fe(3+): aspartate 394 and tyrosine 428. Disulfide bonds link cysteine 404-cysteine 678, cysteine 419-cysteine 639, cysteine 451-cysteine 526, cysteine 475-cysteine 667, cysteine 485-cysteine 499, cysteine 496-cysteine 509, and cysteine 566-cysteine 580. Threonine 453, arginine 457, alanine 459, and glycine 460 together coordinate hydrogencarbonate. The N-linked (GlcNAc...) asparagine glycan is linked to asparagine 476. Tyrosine 520 lines the Fe(3+) pocket. Position 588 (histidine 588) interacts with Fe(3+).

It belongs to the transferrin family. As to quaternary structure, monomer.

It is found in the secreted. In terms of biological role, transferrins are iron binding transport proteins which can bind two Fe(3+) ions in association with the binding of an anion, usually bicarbonate. The protein is Serotransferrin (tf) of Paralichthys olivaceus (Bastard halibut).